A 240-amino-acid chain; its full sequence is Glyceraldehyde 3-phosphate phosphatase (240 aa).

It belongs to the HAD-like hydrolase superfamily. It depends on Mg(2+) as a cofactor.

Catalyzes the dephosphorylation of D,L-glyceraldehyde 3-phosphate in vitro. The sequence is that of Glyceraldehyde 3-phosphate phosphatase from Pyrococcus furiosus (strain ATCC 43587 / DSM 3638 / JCM 8422 / Vc1).